The primary structure comprises 324 residues: tRNA uridine(34) hydroxylase (324 aa).

One can recognise a Rhodanese domain in the interval 145–239 (NDKKTIFIDM…YVHDARKNGL (95 aa)). Cys199 (cysteine persulfide intermediate) is an active-site residue.

This sequence belongs to the TrhO family.

The catalysed reaction is uridine(34) in tRNA + AH2 + O2 = 5-hydroxyuridine(34) in tRNA + A + H2O. In terms of biological role, catalyzes oxygen-dependent 5-hydroxyuridine (ho5U) modification at position 34 in tRNAs. The protein is tRNA uridine(34) hydroxylase of Buchnera aphidicola subsp. Acyrthosiphon pisum (strain APS) (Acyrthosiphon pisum symbiotic bacterium).